The following is a 532-amino-acid chain: Bifunctional purine biosynthesis protein PurH (532 aa).

Residues 1-149 form the MGS-like domain; it reads MTDPAPLTRA…KNHGAVTVLT (149 aa).

Belongs to the PurH family.

The catalysed reaction is (6R)-10-formyltetrahydrofolate + 5-amino-1-(5-phospho-beta-D-ribosyl)imidazole-4-carboxamide = 5-formamido-1-(5-phospho-D-ribosyl)imidazole-4-carboxamide + (6S)-5,6,7,8-tetrahydrofolate. The enzyme catalyses IMP + H2O = 5-formamido-1-(5-phospho-D-ribosyl)imidazole-4-carboxamide. It functions in the pathway purine metabolism; IMP biosynthesis via de novo pathway; 5-formamido-1-(5-phospho-D-ribosyl)imidazole-4-carboxamide from 5-amino-1-(5-phospho-D-ribosyl)imidazole-4-carboxamide (10-formyl THF route): step 1/1. It participates in purine metabolism; IMP biosynthesis via de novo pathway; IMP from 5-formamido-1-(5-phospho-D-ribosyl)imidazole-4-carboxamide: step 1/1. The sequence is that of Bifunctional purine biosynthesis protein PurH from Jannaschia sp. (strain CCS1).